Reading from the N-terminus, the 248-residue chain is Triosephosphate isomerase (248 aa).

9-11 (NWK) is a binding site for substrate. H94 serves as the catalytic Electrophile. The active-site Proton acceptor is the E166. Substrate-binding positions include G172, S212, and 233–234 (GG).

It belongs to the triosephosphate isomerase family. In terms of assembly, homodimer.

It localises to the cytoplasm. The catalysed reaction is D-glyceraldehyde 3-phosphate = dihydroxyacetone phosphate. The protein operates within carbohydrate biosynthesis; gluconeogenesis. Its pathway is carbohydrate degradation; glycolysis; D-glyceraldehyde 3-phosphate from glycerone phosphate: step 1/1. Its function is as follows. Involved in the gluconeogenesis. Catalyzes stereospecifically the conversion of dihydroxyacetone phosphate (DHAP) to D-glyceraldehyde-3-phosphate (G3P). This Clostridium botulinum (strain Loch Maree / Type A3) protein is Triosephosphate isomerase.